The primary structure comprises 267 residues: Cell division protein FtsQ (267 aa).

Residues 1-32 (MRKKTSSNKKNTAKKNNNISLHRKLGLIYKKT) are Cytoplasmic-facing. Residues 33–53 (ILILKIVLIIFICLFAFTKYF) traverse the membrane as a helical segment. Topologically, residues 54 to 267 (ASLKSYLKTN…DKNKYYIEKY (214 aa)) are periplasmic. Residues 73-141 (FKLENVIIEG…STIYIKLFER (69 aa)) form the POTRA domain.

This sequence belongs to the FtsQ/DivIB family. FtsQ subfamily.

Its subcellular location is the cell inner membrane. In terms of biological role, essential cell division protein. The protein is Cell division protein FtsQ of Rickettsia bellii (strain RML369-C).